We begin with the raw amino-acid sequence, 332 residues long: tRNA dimethylallyltransferase (332 aa).

30–37 (GPTAVGKT) provides a ligand contact to ATP. Residue 32 to 37 (TAVGKT) coordinates substrate. Positions 57–60 (DSMQ) are interaction with substrate tRNA.

This sequence belongs to the IPP transferase family. Monomer. Requires Mg(2+) as cofactor.

It catalyses the reaction adenosine(37) in tRNA + dimethylallyl diphosphate = N(6)-dimethylallyladenosine(37) in tRNA + diphosphate. Its function is as follows. Catalyzes the transfer of a dimethylallyl group onto the adenine at position 37 in tRNAs that read codons beginning with uridine, leading to the formation of N6-(dimethylallyl)adenosine (i(6)A). In Natranaerobius thermophilus (strain ATCC BAA-1301 / DSM 18059 / JW/NM-WN-LF), this protein is tRNA dimethylallyltransferase.